The sequence spans 232 residues: Aspartate/glutamate leucyltransferase (232 aa).

Belongs to the R-transferase family. Bpt subfamily.

It localises to the cytoplasm. It carries out the reaction N-terminal L-glutamyl-[protein] + L-leucyl-tRNA(Leu) = N-terminal L-leucyl-L-glutamyl-[protein] + tRNA(Leu) + H(+). The enzyme catalyses N-terminal L-aspartyl-[protein] + L-leucyl-tRNA(Leu) = N-terminal L-leucyl-L-aspartyl-[protein] + tRNA(Leu) + H(+). Functionally, functions in the N-end rule pathway of protein degradation where it conjugates Leu from its aminoacyl-tRNA to the N-termini of proteins containing an N-terminal aspartate or glutamate. This Vibrio vulnificus (strain CMCP6) protein is Aspartate/glutamate leucyltransferase.